The chain runs to 677 residues: UPF0313 protein RPA0679 (677 aa).

The Radical SAM core domain occupies 335–601 (AWDMIKTSVT…VEAIKGLRQR (267 aa)). Positions 349, 353, and 356 each coordinate [4Fe-4S] cluster. The interval 635–677 (RPDQLVPAHQPPGTGKAAGTRRPVRGDGPKPQRFTTKGVRLVK) is disordered.

This sequence belongs to the UPF0313 family. It depends on [4Fe-4S] cluster as a cofactor.

The sequence is that of UPF0313 protein RPA0679 from Rhodopseudomonas palustris (strain ATCC BAA-98 / CGA009).